We begin with the raw amino-acid sequence, 87 residues long: Large ribosomal subunit protein bL31B (87 aa).

Belongs to the bacterial ribosomal protein bL31 family. Type B subfamily. As to quaternary structure, part of the 50S ribosomal subunit.

This is Large ribosomal subunit protein bL31B from Halorhodospira halophila (strain DSM 244 / SL1) (Ectothiorhodospira halophila (strain DSM 244 / SL1)).